Consider the following 955-residue polypeptide: Iron-responsive element-binding protein 2 (955 aa).

[4Fe-4S] cluster-binding residues include Cys504, Cys570, and Cys573.

Belongs to the aconitase/IPM isomerase family. Requires [4Fe-4S] cluster as cofactor. Post-translationally, ubiquitinated and degraded by the proteasome in presence of high level of iron and oxygen.

It localises to the cytoplasm. RNA-binding protein that binds to iron-responsive elements (IRES), which are stem-loop structures found in the 5'-UTR of ferritin, and delta aminolevulinic acid synthase mRNAs, and in the 3'-UTR of transferrin receptor mRNA. Binding to the IRE element in ferritin results in the repression of its mRNA translation. Binding of the protein to the transferrin receptor mRNA inhibits the degradation of this otherwise rapidly degraded mRNA. This Xenopus laevis (African clawed frog) protein is Iron-responsive element-binding protein 2 (ireb2).